Reading from the N-terminus, the 354-residue chain is UDP-3-O-acylglucosamine N-acyltransferase (354 aa).

H258 serves as the catalytic Proton acceptor.

Belongs to the transferase hexapeptide repeat family. LpxD subfamily. Homotrimer.

It catalyses the reaction a UDP-3-O-[(3R)-3-hydroxyacyl]-alpha-D-glucosamine + a (3R)-hydroxyacyl-[ACP] = a UDP-2-N,3-O-bis[(3R)-3-hydroxyacyl]-alpha-D-glucosamine + holo-[ACP] + H(+). The protein operates within bacterial outer membrane biogenesis; LPS lipid A biosynthesis. In terms of biological role, catalyzes the N-acylation of UDP-3-O-acylglucosamine using 3-hydroxyacyl-ACP as the acyl donor. Is involved in the biosynthesis of lipid A, a phosphorylated glycolipid that anchors the lipopolysaccharide to the outer membrane of the cell. In Rhizobium meliloti (strain 1021) (Ensifer meliloti), this protein is UDP-3-O-acylglucosamine N-acyltransferase.